The chain runs to 414 residues: Glucose-1-phosphate adenylyltransferase (414 aa).

Alpha-D-glucose 1-phosphate is bound by residues glycine 164, 181 to 182 (EK), and serine 199.

Belongs to the bacterial/plant glucose-1-phosphate adenylyltransferase family. As to quaternary structure, homotetramer.

The catalysed reaction is alpha-D-glucose 1-phosphate + ATP + H(+) = ADP-alpha-D-glucose + diphosphate. It participates in glycan biosynthesis; glycogen biosynthesis. Its function is as follows. Involved in the biosynthesis of ADP-glucose, a building block required for the elongation reactions to produce glycogen. Catalyzes the reaction between ATP and alpha-D-glucose 1-phosphate (G1P) to produce pyrophosphate and ADP-Glc. This Kocuria rhizophila (strain ATCC 9341 / DSM 348 / NBRC 103217 / DC2201) protein is Glucose-1-phosphate adenylyltransferase.